Consider the following 319-residue polypeptide: Ribonuclease Z (319 aa).

Residues His-62, His-64, Asp-66, His-67, His-139, Asp-210, and His-268 each coordinate Zn(2+). The Proton acceptor role is filled by Asp-66.

The protein belongs to the RNase Z family. In terms of assembly, homodimer. Zn(2+) is required as a cofactor.

It carries out the reaction Endonucleolytic cleavage of RNA, removing extra 3' nucleotides from tRNA precursor, generating 3' termini of tRNAs. A 3'-hydroxy group is left at the tRNA terminus and a 5'-phosphoryl group is left at the trailer molecule.. Zinc phosphodiesterase, which displays some tRNA 3'-processing endonuclease activity. Probably involved in tRNA maturation, by removing a 3'-trailer from precursor tRNA. This Nostoc punctiforme (strain ATCC 29133 / PCC 73102) protein is Ribonuclease Z.